The chain runs to 376 residues: uncharacterized protein (376 aa).

A signal peptide spans 1-22 (MVATGRIIITLLAAALDEIILA).

It belongs to the ascovirus HvAV ORF17 family.

This is an uncharacterized protein from Heliothis virescens ascovirus 3e (HvAV-3e).